The chain runs to 635 residues: Biosynthetic arginine decarboxylase (635 aa).

N6-(pyridoxal phosphate)lysine is present on K100. Position 282 to 292 (282 to 292 (LDIGGGLGVDY)) interacts with substrate.

Belongs to the Orn/Lys/Arg decarboxylase class-II family. SpeA subfamily. Requires Mg(2+) as cofactor. The cofactor is pyridoxal 5'-phosphate.

The enzyme catalyses L-arginine + H(+) = agmatine + CO2. Its pathway is amine and polyamine biosynthesis; agmatine biosynthesis; agmatine from L-arginine: step 1/1. Catalyzes the biosynthesis of agmatine from arginine. The sequence is that of Biosynthetic arginine decarboxylase (speA) from Citrifermentans bemidjiense (strain ATCC BAA-1014 / DSM 16622 / JCM 12645 / Bem) (Geobacter bemidjiensis).